The sequence spans 93 residues: Putative sodium channel toxin Ts41 (93 aa).

The first 23 residues, 1 to 23 (MKIGVLFTIISMLCLLEVRKICS), serve as a signal peptide directing secretion. Disulfide bonds link Cys-22-Cys-87, Cys-39-Cys-62, Cys-48-Cys-67, and Cys-52-Cys-69. The LCN-type CS-alpha/beta domain occupies 26-88 (EGGYPRYFSF…FWNVYRKYCK (63 aa)).

Belongs to the long (4 C-C) scorpion toxin superfamily. Expressed by the venom gland.

The protein resides in the secreted. The edited BmKBTx-like may modulate voltage-gated sodium channels (Nav). Its function is as follows. The non-edited form is able to form a heterodimer. In orthologs, a heterodimer with LVP beta-chain induces lipolysis in rat adipocytes, which is mediated through the beta-2 adrenergic receptor pathway (ADRB2). Since no LVP beta-chains have been identified in the venom of this scorpion, it is possible that this protein is not involved in a lipolysis process. The sequence is that of Putative sodium channel toxin Ts41 from Tityus serrulatus (Brazilian scorpion).